A 298-amino-acid polypeptide reads, in one-letter code: S-adenosyl-L-methionine-dependent methyltransferase dpfgK (298 aa).

This sequence belongs to the methyltransferase superfamily.

It functions in the pathway secondary metabolite biosynthesis; terpenoid biosynthesis. In terms of biological role, S-adenosyl-L-methionine-dependent methyltransferase; part of the gene cluster that mediates the biosynthesis of diterpenoid pyrones. The first step of the pathway is the synthesis of the alpha-pyrone moiety by the polyketide synthase dpfgA via condensation of one acetyl-CoA starter unit with 3 malonyl-CoA units and 2 methylations. The alpha-pyrone is then combined with geranylgeranyl pyrophosphate (GGPP) formed by the GGPP synthase dpfgD through the action of the prenyltransferase dpfgC to yield a linear alpha-pyrone diterpenoid. Subsequent steps in the diterpenoid pyrone biosynthetic pathway involve the decalin core formation, which is initiated by the epoxidation of the C10-C11 olefin by the FAD-dependent oxidoreductase dpfgE, and is followed by a cyclization cascade catalyzed by the terpene cyclase dpfgB. The short chain dehydrogenase/reductase dpfgG then oxidizes the 8S hydroxy group to a ketone and the short chain dehydrogenase/reductase dpfgH reduces the ketone to the 8R hydroxy group to yield higginsianin B. Higginsianin B is further methylated by the methyltransferase dpfgI to produce the intermediate named FDDP B. The cytochrome P450 monooxygenase dfgpJ then catalyzes a three-step oxidation at C-27 to generate a carboxylic acid as well as C-26 hydroxylation. Finally, methyltransferase dpfgK methylates the carboxylic acid generated by dpfgJ, yielding the final diterpenoid pyrones from the pathway which were named FDDP D and FDDP E. This chain is S-adenosyl-L-methionine-dependent methyltransferase dpfgK, found in Gibberella zeae (strain ATCC MYA-4620 / CBS 123657 / FGSC 9075 / NRRL 31084 / PH-1) (Wheat head blight fungus).